The following is a 131-amino-acid chain: Prefoldin subunit beta (131 aa).

Disordered stretches follow at residues 19-41 (LQET…RESE) and 112-131 (LQGG…AGGA). Positions 20–35 (QETAQQVAQQKQQAET) are enriched in low complexity. The segment covering 114–131 (GGAGGGPMGPGGPGAGGA) has biased composition (gly residues).

It belongs to the prefoldin subunit beta family. In terms of assembly, heterohexamer of two alpha and four beta subunits.

The protein resides in the cytoplasm. Functionally, molecular chaperone capable of stabilizing a range of proteins. Seems to fulfill an ATP-independent, HSP70-like function in archaeal de novo protein folding. This chain is Prefoldin subunit beta, found in Natronomonas pharaonis (strain ATCC 35678 / DSM 2160 / CIP 103997 / JCM 8858 / NBRC 14720 / NCIMB 2260 / Gabara) (Halobacterium pharaonis).